The primary structure comprises 547 residues: MSAKEVKFGVDARDRMLRGVDILANAVKVTLGPKGRNVVLDKSFGAPRITKDGVTVAKDIELDDKFENMGAQMVREVASKSADAAGDGTTTATVLAQAIVREGAKAVAAGMNPMDLKRGIDLAVEAVVADLVKNSKKVTSNDEIAQVGTISANGDAEIGKFLADAMKKVGNEGVITVEEAKSLETELDVVEGMQFDRGYISPYFVTNADKMRVEFDDAYILINEKKLSNLNELLPLLEAVVQTGKPLVIVAEDVEGEALATLVVNRLRGGLKVAAVKAPGFGDRRKAMLQDIAILTGGQAISEDLGIKMENVTLQMLGRAKKVMIDKENTTIVNGAGKKADIEARVAQIKAQIEETTSDYDREKLQERLAKLAGGVAVIRVGGATEVEVKERKDRVDDAMHATRAAVEEGIVPGGGVALLRASEQLKGLKTKNDDQKTGVEIVRRALSAPARQIAINAGEDGSVIVGKVLEKEQYAFGFDSQSGEYGDLVKKGIIDPTKVVRTAIQNAASVAALLITTEAMIAELPKKGGAGAGGMPPGGGMGGMDF.

ATP is bound by residues 30–33 (TLGP), Lys51, 87–91 (DGTTT), Gly415, and Asp496.

The protein belongs to the chaperonin (HSP60) family. Forms a cylinder of 14 subunits composed of two heptameric rings stacked back-to-back. Interacts with the co-chaperonin GroES.

The protein resides in the cytoplasm. The catalysed reaction is ATP + H2O + a folded polypeptide = ADP + phosphate + an unfolded polypeptide.. Together with its co-chaperonin GroES, plays an essential role in assisting protein folding. The GroEL-GroES system forms a nano-cage that allows encapsulation of the non-native substrate proteins and provides a physical environment optimized to promote and accelerate protein folding. The protein is Chaperonin GroEL 2 of Rhodopseudomonas palustris (strain ATCC BAA-98 / CGA009).